The following is a 118-amino-acid chain: Ly-6/neurotoxin-like protein 1 (118 aa).

Residues 1 to 22 form the signal peptide; that stretch reads MTPLLTLFLVVLMGLPLAPVQA. Positions 23-107 constitute a UPAR/Ly6 domain; the sequence is LDCHVCAYNG…LAIPATLALA (85 aa). 5 disulfides stabilise this stretch: Cys-25–Cys-48, Cys-28–Cys-35, Cys-41–Cys-66, Cys-70–Cys-87, and Cys-88–Cys-93. A lipid anchor (GPI-anchor amidated serine) is attached at Ser-95. Positions 96 to 118 are cleaved as a propeptide — removed in mature form; that stretch reads AGLAIPATLALAPVLLATLWGLL.

In terms of assembly, interacts with nAChRs containing alpha-4:beta-2 (CHRNA4:CHRNB2) and alpha-7 (CHRNA7) subunits. Interacts with CHRNA4 probably in the endoplasmic reticulum prior to nAChR pentameric assembly. Interacts with KCNA2/Potassium voltage-gated channel subfamily A member 2. Expressed in lung predominantly in airway epithelial cells, submucous glands, and smooth muscle cells, in endothelial and smooth muscle cells in vessel walls and in alveolar type II cells (at protein level). Also expressed in brain.

Its subcellular location is the cell membrane. It localises to the cell projection. It is found in the dendrite. The protein localises to the endoplasmic reticulum. Its function is as follows. Acts in different tissues through interaction to nicotinic acetylcholine receptors (nAChRs). The proposed role as modulator of nAChR activity seems to be dependent on the nAChR subtype and stoichiometry, and to involve an effect on nAChR trafficking and its cell surface expression, and on single channel properties of the nAChR inserted in the plasma membrane. Modulates functional properties of nicotinic acetylcholine receptors (nAChRs) to prevent excessive excitation, and hence neurodegeneration. Enhances desensitization by increasing both the rate and extent of desensitization of alpha-4:beta-2-containing nAChRs and slowing recovery from desensitization. Promotes large amplitude ACh-evoked currents through alpha-4:beta-2 nAChRs. Is involved in regulation of the nAChR pentameric assembly in the endoplasmic reticulum. Shifts stoichiometry from high sensitivity alpha-4(2):beta-2(3) to low sensitivity alpha-4(3):beta-2(2) nAChR. In vitro modulates alpha-3:beta-4-containing nAChRs. Reduces cell surface expression of (alpha-3:beta-4)(2):beta-4 and (alpha-3:beta-4)(2):alpha-5 nAChRs suggesting an interaction with nAChR alpha-3(-):(+)beta-4 subunit interfaces and an allosteric mode. Corresponding single channel effects characterized by decreased unitary conductance, altered burst proportions and enhanced desensitization/inactivation seem to depend on nAChR alpha:alpha subunit interfaces and are greater in (alpha-3:beta-2)(2):alpha-3 when compared to (alpha-3:beta-2)(2):alpha-5 nAChRs. Prevents plasticity in the primary visual cortex late in life. This is Ly-6/neurotoxin-like protein 1 from Macaca mulatta (Rhesus macaque).